Consider the following 720-residue polypeptide: Engulfment and cell motility protein 2 (720 aa).

A Phosphotyrosine modification is found at Tyr-48. The 175-residue stretch at 311-485 folds into the ELMO domain; that stretch reads AQRDIIFELR…VVREQITRAL (175 aa). A Phosphoserine modification is found at Ser-503. The 122-residue stretch at 553–674 folds into the PH domain; that stretch reads SSFRKIGNRR…LLGKDMSSEL (122 aa). The SH3-binding motif lies at 700 to 707; it reads PEAPPPIP. The residue at position 717 (Tyr-717) is a Phosphotyrosine.

In terms of assembly, interacts with the SH3-domain of DOCK1 via its SH3-binding site. Probably part of a complex with DOCK1 and RAC1. Probably part of a complex with DOCK1 and CRK isoform CRK-II. Interacts with ARHGEF16, DOCK4 and EPHA2; mediates activation of RAC1 by EPHA2. Interacts with ADGRB3. Interacts with AUTS2; the interaction is direct. Widely expressed, with a higher expression in skeletal muscle, kidney and placenta.

Its subcellular location is the cytoplasm. The protein localises to the cytosol. It localises to the membrane. In terms of biological role, involved in cytoskeletal rearrangements required for phagocytosis of apoptotic cells and cell motility. Acts in association with DOCK1 and CRK. Was initially proposed to be required in complex with DOCK1 to activate Rac Rho small GTPases. May enhance the guanine nucleotide exchange factor (GEF) activity of DOCK1. This Homo sapiens (Human) protein is Engulfment and cell motility protein 2 (ELMO2).